The sequence spans 453 residues: Exopolyphosphatase PRUNE1 (453 aa).

Met-1 is subject to N-acetylmethionine. Mn(2+) contacts are provided by Asp-28, Asp-30, Asp-106, and Asp-179. The short motif at 106–108 (DHH) is the DHH motif element. The tract at residues 393–420 (SLLSGLSQDEEEPPLPPTPMNSLVDECP) is essential for homodimerization. The disordered stretch occupies residues 396–419 (SGLSQDEEEPPLPPTPMNSLVDEC). Ser-399 carries the phosphoserine modification. Residue Thr-410 is modified to Phosphothreonine. Phosphoserine is present on Ser-414.

The protein belongs to the PPase class C family. Prune subfamily. In terms of assembly, homooligomer. Able to homodimerize via its C-terminal domain. Interacts with NME1. Interacts with GSK3; at focal adhesion complexes where paxillin and vinculin are colocalized. It depends on Mn(2+) as a cofactor.

Its subcellular location is the cytoplasm. The protein localises to the nucleus. It localises to the cell junction. The protein resides in the focal adhesion. The catalysed reaction is diphosphate + H2O = 2 phosphate + H(+). With respect to regulation, activated by magnesium ions and inhibited by manganese ions. Inhibited by dipyridamole, moderately sensitive to IBMX and inhibited by vinpocetine. Functionally, phosphodiesterase (PDE) that has higher activity toward cAMP than cGMP, as substrate. Plays a role in cell proliferation, is able to induce cell motility and acts as a negative regulator of NME1. This Bos taurus (Bovine) protein is Exopolyphosphatase PRUNE1 (PRUNE1).